Consider the following 187-residue polypeptide: Elongation factor P (187 aa).

It belongs to the elongation factor P family.

The protein localises to the cytoplasm. It functions in the pathway protein biosynthesis; polypeptide chain elongation. Involved in peptide bond synthesis. Stimulates efficient translation and peptide-bond synthesis on native or reconstituted 70S ribosomes in vitro. Probably functions indirectly by altering the affinity of the ribosome for aminoacyl-tRNA, thus increasing their reactivity as acceptors for peptidyl transferase. The chain is Elongation factor P from Ruegeria pomeroyi (strain ATCC 700808 / DSM 15171 / DSS-3) (Silicibacter pomeroyi).